Reading from the N-terminus, the 197-residue chain is Molybdenum cofactor guanylyltransferase (197 aa).

GTP is bound by residues 12-14, Lys-25, Asn-53, Asp-71, and Asp-101; that span reads LAG. Asp-101 contributes to the Mg(2+) binding site.

It belongs to the MobA family. As to quaternary structure, monomer. It depends on Mg(2+) as a cofactor.

It localises to the cytoplasm. It catalyses the reaction Mo-molybdopterin + GTP + H(+) = Mo-molybdopterin guanine dinucleotide + diphosphate. Its function is as follows. Transfers a GMP moiety from GTP to Mo-molybdopterin (Mo-MPT) cofactor (Moco or molybdenum cofactor) to form Mo-molybdopterin guanine dinucleotide (Mo-MGD) cofactor. The sequence is that of Molybdenum cofactor guanylyltransferase from Bordetella pertussis (strain Tohama I / ATCC BAA-589 / NCTC 13251).